The following is a 283-amino-acid chain: F-box only protein 27 (283 aa).

The disordered stretch occupies residues 1–23 (MGASVSRGRAARVPAPEPEPEEA). One can recognise an F-box domain in the interval 23-70 (ALDLSQLPPELLLVVLSHVPPRTLLGRCRQVCRGWRALVDGQALWLLI). The 177-residue stretch at 104–280 (FCARRPIGRN…VTNSSVIVRV (177 aa)) folds into the FBA domain.

As to quaternary structure, part of a SCF (SKP1-cullin-F-box) protein ligase complex. Interacts with SKP1 and CUL1. In terms of tissue distribution, predominantly expressed in brain, heart and kidney. Expressed at lower levels in liver and lung.

Its function is as follows. Substrate-recognition component of the SCF (SKP1-CUL1-F-box protein)-type E3 ubiquitin ligase complex. Able to recognize and bind denatured glycoproteins, which are modified with complex-type oligosaccharides. This is F-box only protein 27 (FBXO27) from Homo sapiens (Human).